Reading from the N-terminus, the 251-residue chain is 5'-nucleotidase SurE (251 aa).

A divalent metal cation is bound by residues aspartate 8, aspartate 9, serine 39, and asparagine 95.

It belongs to the SurE nucleotidase family. The cofactor is a divalent metal cation.

Its subcellular location is the cytoplasm. It carries out the reaction a ribonucleoside 5'-phosphate + H2O = a ribonucleoside + phosphate. In terms of biological role, nucleotidase that shows phosphatase activity on nucleoside 5'-monophosphates. In Clostridium botulinum (strain Eklund 17B / Type B), this protein is 5'-nucleotidase SurE.